Reading from the N-terminus, the 506-residue chain is Histidine ammonia-lyase (506 aa).

A cross-link (5-imidazolinone (Ala-Gly)) is located at residues 143 to 145; it reads ASG. A 2,3-didehydroalanine (Ser) modification is found at Ser144.

Belongs to the PAL/histidase family. Contains an active site 4-methylidene-imidazol-5-one (MIO), which is formed autocatalytically by cyclization and dehydration of residues Ala-Ser-Gly.

It localises to the cytoplasm. The enzyme catalyses L-histidine = trans-urocanate + NH4(+). Its pathway is amino-acid degradation; L-histidine degradation into L-glutamate; N-formimidoyl-L-glutamate from L-histidine: step 1/3. The polypeptide is Histidine ammonia-lyase (Enterobacter sp. (strain 638)).